Consider the following 315-residue polypeptide: Ribosomal RNA small subunit methyltransferase H (315 aa).

S-adenosyl-L-methionine is bound by residues 42–44 (GGH), Asp59, Phe96, Asp108, and Gln115.

Belongs to the methyltransferase superfamily. RsmH family.

The protein resides in the cytoplasm. It carries out the reaction cytidine(1402) in 16S rRNA + S-adenosyl-L-methionine = N(4)-methylcytidine(1402) in 16S rRNA + S-adenosyl-L-homocysteine + H(+). Its function is as follows. Specifically methylates the N4 position of cytidine in position 1402 (C1402) of 16S rRNA. In Gemmatimonas aurantiaca (strain DSM 14586 / JCM 11422 / NBRC 100505 / T-27), this protein is Ribosomal RNA small subunit methyltransferase H.